The chain runs to 449 residues: Wilms tumor protein (449 aa).

Residues 48-84 are disordered; it reads YGSLGGPAPPPAPPPPPPPPPHSFIKQEPSWGGAEPH. Pro residues predominate over residues 54 to 69; it reads PAPPPAPPPPPPPPPH. Glycyl lysine isopeptide (Lys-Gly) (interchain with G-Cter in SUMO) cross-links involve residues Lys73 and Lys177. A 9aaTAD motif is present at residues 236 to 244; it reads MTWNQMNLG. 3 consecutive C2H2-type zinc fingers follow at residues 323-347, 353-377, and 383-405; these read FMCAYPGCNKRYFKLSHLQMHSRKH, YQCDFKDCERRFSRSDQLKRHQRRH, and FQCKTCQRKFSRSDHLKTHTRTH. Important for interaction with target DNA regions lie at residues 367-381 and 393-401; these read SDQLKRHQRRHTGVK and SRSDHLKTH. The KTS motif motif lies at 408-410; the sequence is KTS. Residues 414–438 form a C2H2-type 4 zinc finger; it reads FSCRWPSCQKKFARSDELVRHHNMH. Residue Lys444 forms a Glycyl lysine isopeptide (Lys-Gly) (interchain with G-Cter in SUMO2) linkage.

This sequence belongs to the EGR C2H2-type zinc-finger protein family. In terms of assembly, homodimer. Interacts with WTIP. Interacts with actively translating polysomes. Detected in nuclear ribonucleoprotein (mRNP) particles. Interacts with HNRNPU via the zinc-finger region. Interacts with U2AF2. Interacts with CITED2. Interacts with ZNF224 via the zinc-finger region. Interacts with WTAP and SRY. Interacts with AMER1. Interacts with RBM4. As to expression, expressed in the kidney and a subset of hematopoietic cells.

Its subcellular location is the nucleus. It is found in the nucleolus. It localises to the cytoplasm. The protein localises to the nucleus speckle. The protein resides in the nucleoplasm. Functionally, transcription factor that plays an important role in cellular development and cell survival. Recognizes and binds to the DNA sequence 5'-GCG(T/G)GGGCG-3'. Regulates the expression of numerous target genes, including EPO. Plays an essential role for development of the urogenital system. It has a tumor suppressor as well as an oncogenic role in tumor formation. Function may be isoform-specific: isoforms lacking the KTS motif may act as transcription factors. Isoforms containing the KTS motif may bind mRNA and play a role in mRNA metabolism or splicing. Isoform 1 has lower affinity for DNA, and can bind RNA. In Homo sapiens (Human), this protein is Wilms tumor protein (WT1).